The following is a 158-amino-acid chain: NAD(P)H-quinone oxidoreductase subunit N (158 aa).

This sequence belongs to the complex I NdhN subunit family. As to quaternary structure, NDH-1 can be composed of about 15 different subunits; different subcomplexes with different compositions have been identified which probably have different functions.

It localises to the cellular thylakoid membrane. The catalysed reaction is a plastoquinone + NADH + (n+1) H(+)(in) = a plastoquinol + NAD(+) + n H(+)(out). It carries out the reaction a plastoquinone + NADPH + (n+1) H(+)(in) = a plastoquinol + NADP(+) + n H(+)(out). Its function is as follows. NDH-1 shuttles electrons from an unknown electron donor, via FMN and iron-sulfur (Fe-S) centers, to quinones in the respiratory and/or the photosynthetic chain. The immediate electron acceptor for the enzyme in this species is believed to be plastoquinone. Couples the redox reaction to proton translocation, and thus conserves the redox energy in a proton gradient. Cyanobacterial NDH-1 also plays a role in inorganic carbon-concentration. This Gloeothece citriformis (strain PCC 7424) (Cyanothece sp. (strain PCC 7424)) protein is NAD(P)H-quinone oxidoreductase subunit N.